The following is a 756-amino-acid chain: Hyperosmolality-gated Ca2+ permeable channel 1.5 (756 aa).

10 helical membrane passes run 7-27 (IGVA…AFAI), 101-121 (IYLL…TVMV), 154-174 (SRFW…CFVL), 373-393 (LVIA…IAFV), 425-445 (FLPG…LMLM), 465-485 (YYMF…TALQ), 510-530 (ATFF…GEIL), 574-594 (FILG…ILVF), 628-648 (VVIA…TKKA), and 651-671 (STPL…FCQG). The interval 731-756 (PDKTPDLVATKRGSRRFNSGSAETFT) is disordered. A compositionally biased stretch (polar residues) spans 746-756 (RFNSGSAETFT).

It belongs to the CSC1 (TC 1.A.17) family.

The protein localises to the membrane. Acts as an osmosensitive calcium-permeable cation channel. In Arabidopsis thaliana (Mouse-ear cress), this protein is Hyperosmolality-gated Ca2+ permeable channel 1.5.